The chain runs to 829 residues: Probable beta-glucosidase H (829 aa).

N-linked (GlcNAc...) asparagine glycosylation occurs at Asn-13. Asp-225 is an active-site residue. Asn-304, Asn-473, Asn-602, Asn-627, and Asn-664 each carry an N-linked (GlcNAc...) asparagine glycan. Residues 389-548 enclose the PA14 domain; sequence RMLSNAVIHF…DPEQMVANAV (160 aa).

Belongs to the glycosyl hydrolase 3 family.

It localises to the secreted. The catalysed reaction is Hydrolysis of terminal, non-reducing beta-D-glucosyl residues with release of beta-D-glucose.. The protein operates within glycan metabolism; cellulose degradation. Beta-glucosidases are one of a number of cellulolytic enzymes involved in the degradation of cellulosic biomass. Catalyzes the last step releasing glucose from the inhibitory cellobiose. The chain is Probable beta-glucosidase H (bglH) from Aspergillus fumigatus (strain ATCC MYA-4609 / CBS 101355 / FGSC A1100 / Af293) (Neosartorya fumigata).